The sequence spans 741 residues: D-(-)-3-hydroxybutyrate oligomer hydrolase (741 aa).

The signal sequence occupies residues 1 to 23 (MKTIQGKSPGRWYSRGMLLAAMA). A disordered region spans residues 45–68 (NGNAGGNGNNNGNNNGNTVSNTKP). S338 serves as the catalytic Charge relay system.

Belongs to the D-(-)-3-hydroxybutyrate oligomer hydrolase family.

It localises to the secreted. It carries out the reaction (3R)-hydroxybutanoate dimer + H2O = 2 (R)-3-hydroxybutanoate + H(+). The protein operates within lipid metabolism; butanoate metabolism. Functionally, participates in the degradation of poly-3-hydroxybutyrate (PHB). It works downstream of poly(3-hydroxybutyrate) depolymerase, hydrolyzing D(-)-3-hydroxybutyrate oligomers of various length (3HB-oligomers) into 3HB-monomers. This chain is D-(-)-3-hydroxybutyrate oligomer hydrolase, found in Ralstonia pickettii (Burkholderia pickettii).